The primary structure comprises 318 residues: Methenyltetrahydromethanopterin cyclohydrolase (318 aa).

The protein belongs to the MCH family.

It localises to the cytoplasm. The enzyme catalyses 5,10-methenyl-5,6,7,8-tetrahydromethanopterin + H2O = N(5)-formyl-5,6,7,8-tetrahydromethanopterin + H(+). It functions in the pathway one-carbon metabolism; methanogenesis from CO(2); 5,10-methenyl-5,6,7,8-tetrahydromethanopterin from CO(2): step 3/3. In terms of biological role, catalyzes the reversible interconversion of 5-formyl-H(4)MPT to methenyl-H(4)MPT(+). This is Methenyltetrahydromethanopterin cyclohydrolase from Methanocella arvoryzae (strain DSM 22066 / NBRC 105507 / MRE50).